Here is a 457-residue protein sequence, read N- to C-terminus: Glutamyl-tRNA reductase (457 aa).

Substrate is bound by residues 49–52, serine 109, 114–116, and glutamine 120; these read TCNR and ETQ. Cysteine 50 functions as the Nucleophile in the catalytic mechanism. 189–194 contacts NADP(+); sequence GAGKMG.

The protein belongs to the glutamyl-tRNA reductase family. In terms of assembly, homodimer.

It catalyses the reaction (S)-4-amino-5-oxopentanoate + tRNA(Glu) + NADP(+) = L-glutamyl-tRNA(Glu) + NADPH + H(+). It participates in porphyrin-containing compound metabolism; protoporphyrin-IX biosynthesis; 5-aminolevulinate from L-glutamyl-tRNA(Glu): step 1/2. Its function is as follows. Catalyzes the NADPH-dependent reduction of glutamyl-tRNA(Glu) to glutamate 1-semialdehyde (GSA). The polypeptide is Glutamyl-tRNA reductase (Oceanobacillus iheyensis (strain DSM 14371 / CIP 107618 / JCM 11309 / KCTC 3954 / HTE831)).